Reading from the N-terminus, the 185-residue chain is uncharacterized protein (185 aa).

Residues Gln-160–Gln-185 form a disordered region.

This is an uncharacterized protein from Saccharomyces cerevisiae (strain ATCC 204508 / S288c) (Baker's yeast).